A 188-amino-acid polypeptide reads, in one-letter code: Transcription antitermination protein NusB (188 aa).

Residues R154 to P188 are disordered. The segment covering D172–P188 has biased composition (acidic residues).

The protein belongs to the NusB family.

In terms of biological role, involved in transcription antitermination. Required for transcription of ribosomal RNA (rRNA) genes. Binds specifically to the boxA antiterminator sequence of the ribosomal RNA (rrn) operons. The protein is Transcription antitermination protein NusB of Corynebacterium efficiens (strain DSM 44549 / YS-314 / AJ 12310 / JCM 11189 / NBRC 100395).